We begin with the raw amino-acid sequence, 955 residues long: UvrABC system protein A (955 aa).

An ATP-binding site is contributed by 35-42 (GLSGSGKS). 2 consecutive ABC transporter domains span residues 322 to 601 (WGST…EESI) and 621 to 951 (GHDN…RYLK). 654–661 (GVSGSGKS) contacts ATP. The segment at 754–780 (CEACQGDGLIKIEMHFLPDVYVKCDIC) adopts a C4-type zinc-finger fold.

This sequence belongs to the ABC transporter superfamily. UvrA family. Forms a heterotetramer with UvrB during the search for lesions.

The protein localises to the cytoplasm. The UvrABC repair system catalyzes the recognition and processing of DNA lesions. UvrA is an ATPase and a DNA-binding protein. A damage recognition complex composed of 2 UvrA and 2 UvrB subunits scans DNA for abnormalities. When the presence of a lesion has been verified by UvrB, the UvrA molecules dissociate. The protein is UvrABC system protein A of Rickettsia conorii (strain ATCC VR-613 / Malish 7).